A 279-amino-acid chain; its full sequence is Movement protein (279 aa).

Residues 247–279 (ESEELNVESPPAAIGSSSASRSEAFRPQVVNGL) form a disordered region. Over residues 254–268 (ESPPAAIGSSSASRS) the composition is skewed to low complexity.

This sequence belongs to the cucumovirus movement protein family.

It is found in the host cell junction. The protein resides in the host plasmodesma. Its function is as follows. Transports viral genome to neighboring plant cells directly through plasmosdesmata, without any budding. The movement protein allows efficient cell to cell propagation, by bypassing the host cell wall barrier. Acts by forming a tubular structure at the host plasmodesmata, enlarging it enough to allow free passage of virion capsids. The polypeptide is Movement protein (Cucumis sativus (Cucumber)).